The chain runs to 676 residues: UvrABC system protein B (676 aa).

The region spanning 26-414 (EGLENGLAHQ…SDGEIAEQVV (389 aa)) is the Helicase ATP-binding domain. 39-46 (GVTGSGKT) is an ATP binding site. Residues 92-115 (YFDYYQPEAYVPTTDTFIEKDSSV) carry the Beta-hairpin motif. Positions 432–598 (QVDDLLSEIR…ALKKDVADIL (167 aa)) constitute a Helicase C-terminal domain. In terms of domain architecture, UVR spans 636 to 671 (EKAIQKLESKMYQHAKDLEFEQAAQVRDEIDNLRKQ).

The protein belongs to the UvrB family. As to quaternary structure, forms a heterotetramer with UvrA during the search for lesions. Interacts with UvrC in an incision complex.

Its subcellular location is the cytoplasm. Functionally, the UvrABC repair system catalyzes the recognition and processing of DNA lesions. A damage recognition complex composed of 2 UvrA and 2 UvrB subunits scans DNA for abnormalities. Upon binding of the UvrA(2)B(2) complex to a putative damaged site, the DNA wraps around one UvrB monomer. DNA wrap is dependent on ATP binding by UvrB and probably causes local melting of the DNA helix, facilitating insertion of UvrB beta-hairpin between the DNA strands. Then UvrB probes one DNA strand for the presence of a lesion. If a lesion is found the UvrA subunits dissociate and the UvrB-DNA preincision complex is formed. This complex is subsequently bound by UvrC and the second UvrB is released. If no lesion is found, the DNA wraps around the other UvrB subunit that will check the other stand for damage. The chain is UvrABC system protein B from Aliivibrio fischeri (strain ATCC 700601 / ES114) (Vibrio fischeri).